Reading from the N-terminus, the 140-residue chain is Nucleoside diphosphate kinase (140 aa).

Residues Lys11, Phe59, Arg87, Thr93, Arg104, and Asn114 each coordinate ATP. His117 serves as the catalytic Pros-phosphohistidine intermediate.

Belongs to the NDK family. As to quaternary structure, homotetramer. Requires Mg(2+) as cofactor.

It localises to the cytoplasm. It carries out the reaction a 2'-deoxyribonucleoside 5'-diphosphate + ATP = a 2'-deoxyribonucleoside 5'-triphosphate + ADP. The catalysed reaction is a ribonucleoside 5'-diphosphate + ATP = a ribonucleoside 5'-triphosphate + ADP. Major role in the synthesis of nucleoside triphosphates other than ATP. The ATP gamma phosphate is transferred to the NDP beta phosphate via a ping-pong mechanism, using a phosphorylated active-site intermediate. The protein is Nucleoside diphosphate kinase of Rickettsia canadensis (strain McKiel).